Consider the following 122-residue polypeptide: Large ribosomal subunit protein eL18 (122 aa).

This sequence belongs to the eukaryotic ribosomal protein eL18 family.

The chain is Large ribosomal subunit protein eL18 from Picrophilus torridus (strain ATCC 700027 / DSM 9790 / JCM 10055 / NBRC 100828 / KAW 2/3).